Reading from the N-terminus, the 121-residue chain is Flagellar protein FliT (121 aa).

Residues 1–50 (MNNAPHLYFAWQQLVEKSQLMLRLATEEQWDELIASEMAYVNAVQEIAHL) form a required for homodimerization region. The tract at residues 60 to 98 (MQEQLRPMLHLILDNESKVKQLLQIRMDELAKLVGQSSV) is fliD binding.

The protein belongs to the FliT family. Homodimer. Interacts with FliD and FlhC.

The protein resides in the cytoplasm. It is found in the cytosol. Functionally, dual-function protein that regulates the transcription of class 2 flagellar operons and that also acts as an export chaperone for the filament-capping protein FliD. As a transcriptional regulator, acts as an anti-FlhDC factor; it directly binds FlhC, thus inhibiting the binding of the FlhC/FlhD complex to class 2 promoters, resulting in decreased expression of class 2 flagellar operons. As a chaperone, effects FliD transition to the membrane by preventing its premature polymerization, and by directing it to the export apparatus. This chain is Flagellar protein FliT, found in Escherichia coli O17:K52:H18 (strain UMN026 / ExPEC).